A 602-amino-acid polypeptide reads, in one-letter code: NAD-reducing hydrogenase HoxS subunit alpha (602 aa).

219 to 228 (GRGGAGFSTG) provides a ligand contact to NAD(+). 332–379 (GAGAYICGDESALIESCEGKRGTPRVKPPFPVQQGYLGKPTSVNNVET) contributes to the FMN binding site. The [4Fe-4S] cluster site is built by Cys499, Cys502, Cys505, and Cys545.

This sequence belongs to the complex I 51 kDa subunit family. As to quaternary structure, tetramer of an alpha and a gamma subunits (flavin-containing dimer), and a delta and a nickel-containing beta subunit (hydrogenase dimer). FMN serves as cofactor. The cofactor is [4Fe-4S] cluster.

It localises to the cytoplasm. It catalyses the reaction H2 + NAD(+) = NADH + H(+). Its function is as follows. Subunits alpha and gamma of HoxS constitute an NADH--oxidoreductase. This chain is NAD-reducing hydrogenase HoxS subunit alpha (hoxF), found in Cupriavidus necator (strain ATCC 17699 / DSM 428 / KCTC 22496 / NCIMB 10442 / H16 / Stanier 337) (Ralstonia eutropha).